We begin with the raw amino-acid sequence, 257 residues long: 5'-nucleotidase SurE (257 aa).

4 residues coordinate a divalent metal cation: Asp-15, Asp-16, Ser-46, and Asn-99.

The protein belongs to the SurE nucleotidase family. The cofactor is a divalent metal cation.

Its subcellular location is the cytoplasm. It carries out the reaction a ribonucleoside 5'-phosphate + H2O = a ribonucleoside + phosphate. In terms of biological role, nucleotidase that shows phosphatase activity on nucleoside 5'-monophosphates. This chain is 5'-nucleotidase SurE, found in Aliivibrio fischeri (strain ATCC 700601 / ES114) (Vibrio fischeri).